Here is a 416-residue protein sequence, read N- to C-terminus: Vacuole membrane protein KMS2 (416 aa).

N-acetylglycine is present on Gly2. At 2-59 (GYGNRASSKTPAISGLREKHQQDLEKLTLTSQPFKTLRLFVVAVFLYVRRWSSYLLAN) the chain is on the cytoplasmic side. A helical membrane pass occupies residues 60–80 (VGWLILFCSIFVAFAALLVTL). Residues 81 to 100 (DGPHVKHVEELSEYTRFGLW) are Lumenal-facing. The chain crosses the membrane as a helical span at residues 101–123 (WIFLGVASSIGLGSGLHTFVLYL). At 124–249 (GPHIALFTIK…WLLSHSQYLN (126 aa)) the chain is on the cytoplasmic side. Residues 250–270 (FFTILILASVPNPLFDLAGIM) form a helical membrane-spanning segment. The Lumenal portion of the chain corresponds to 271 to 281 (CGQFEKPFWEF). The helical transmembrane segment at 282 to 304 (FLATLIGKAIIKTHIQTVFIICV) threads the bilayer. At 305–315 (CNNQLLDWVEN) the chain is on the cytoplasmic side. The helical transmembrane segment at 316-336 (ELIYILSFVPGFASALPELTA) threads the bilayer. The Lumenal segment spans residues 337–364 (KLRLMKEKYLIASPPVSSDINVKKWDLS). Residues 365-385 (FASVWNGVVWLMLLNFFGQIV) traverse the membrane as a helical segment. Residues 386 to 416 (TSTAQRYLKKQQEEELDALTNKSSLTSKKSK) are Cytoplasmic-facing.

The protein belongs to the VMP1 family.

Its subcellular location is the endoplasmic reticulum membrane. Involved in the early secretory pathway. Required for the correct export of secretory products from the endoplasmic reticulum (ER) and involved in the maintenance of ER integrity. The sequence is that of Vacuole membrane protein KMS2 from Arabidopsis thaliana (Mouse-ear cress).